A 291-amino-acid polypeptide reads, in one-letter code: Probable plasmid-partitioning protein ParB (291 aa).

It belongs to the ParB family.

This Deinococcus radiodurans (strain ATCC 13939 / DSM 20539 / JCM 16871 / CCUG 27074 / LMG 4051 / NBRC 15346 / NCIMB 9279 / VKM B-1422 / R1) protein is Probable plasmid-partitioning protein ParB.